The primary structure comprises 92 residues: MELVPKFLAGLILLTLCVGGCYAQHWSYGLRPGGKRNAENLIDSFQEIAKEADQLAEPQHFECTISQPRSPLRALKGALESLIEEETGQKKI.

Residues 1–23 (MELVPKFLAGLILLTLCVGGCYA) form the signal peptide. Glutamine 24 is subject to Pyrrolidone carboxylic acid. Glycine 33 carries the post-translational modification Glycine amide.

Belongs to the GnRH family.

Its subcellular location is the secreted. In terms of biological role, stimulates the secretion of gonadotropins; it stimulates the secretion of both luteinizing and follicle-stimulating hormones. The polypeptide is Progonadoliberin-1 (GNRH1) (Tupaia belangeri (Common tree shrew)).